The chain runs to 553 residues: MFCIQCEQTLEAPKKKGCAYATGMCGKTAEISDLQDVLVYILQGVSYWADLAHKFDIIDDEINHWAPRAFFATLTNVNFDRERILALANLAENYKTRLKQAVIAATTLAQQPLPTLPTVAEFTLPNTIDAILTLAPQVAVNRGYETINEDVIGLRLLCLYGLKGAAAYMEHARVLGQTNNAIYAQYHHIMSWLGTDPTDLNALLECSMEIGLMNYKVMEMLDLGETNTFGHPLPSQVNVKPIQGKCILVSGHDLHDLEKILQQTEGKHINVYTNGEMLPAHSYPELKKYPHLVGNYGSAWQNQQLEFANFPGAIVMTSNCLINPNVGKYADRIFTRSIVAWPGVAHIEGDDFSQVIDCALALDGFQHTEIEHMITIGFGRNALMNAAPAVIDQVKQGNINHFFLVGGCDGAKEERSYFTDFAAQVPQDSLILTLACGKYRFNKNNFGDINGIPRLLDVGQCNDAYSAIQLALALANEFDCSINELPLTLVLSWFEQKAIVILLTLFALGVKGIYTGPTAPAFLTDNLLAIIAEKFDMRSISTPEADLNTILSA.

Cys-3, Cys-6, Cys-18, and Cys-25 together coordinate [2Fe-2S] cluster. 8 residues coordinate hybrid [4Fe-2O-2S] cluster: His-252, Glu-276, Cys-320, Cys-408, Cys-436, Cys-461, Glu-495, and Lys-497. Cys-408 carries the cysteine persulfide modification.

It belongs to the HCP family. The cofactor is [2Fe-2S] cluster. Hybrid [4Fe-2O-2S] cluster serves as cofactor.

Its subcellular location is the cytoplasm. The catalysed reaction is A + NH4(+) + H2O = hydroxylamine + AH2 + H(+). Catalyzes the reduction of hydroxylamine to form NH(3) and H(2)O. This is Hydroxylamine reductase from Photobacterium phosphoreum.